Here is a 101-residue protein sequence, read N- to C-terminus: Apolipoprotein C-II (101 aa).

An N-terminal signal peptide occupies residues 1–22; sequence MGARHLLALLLVLLVLGFEVQG. The interval 66 to 74 is lipid binding; the sequence is TMDEKIRDM. The interval 78-101 is lipoprotein lipase cofactor; the sequence is STAAVSTYVGIFTDQLLSLLKGDE.

The protein belongs to the apolipoprotein C2 family. Post-translationally, proapolipoprotein C-II is synthesized as a sialic acid containing glycoprotein which is subsequently desialylated prior to its proteolytic processing. In terms of processing, proapolipoprotein C-II, the major form found in plasma undergoes proteolytic cleavage of its N-terminal hexapeptide to generate apolipoprotein C-II, which occurs as the minor form in plasma.

The protein localises to the secreted. Component of chylomicrons, very low-density lipoproteins (VLDL), low-density lipoproteins (LDL), and high-density lipoproteins (HDL) in plasma. Plays an important role in lipoprotein metabolism as an activator of lipoprotein lipase. Both proapolipoprotein C-II and apolipoprotein C-II can activate lipoprotein lipase. This Tapirus indicus (Asiatic tapir) protein is Apolipoprotein C-II (APOC2).